The following is a 50-amino-acid chain: Light-harvesting protein B-880 alpha chain (50 aa).

Over 1 to 12 the chain is Cytoplasmic; it reads MYKLWLLFDPRR. Residues 13–33 traverse the membrane as a helical segment; the sequence is ALVALSAFLFVLALIIHFIAL. H29 contacts a bacteriochlorophyll. At 34–50 the chain is on the periplasmic side; the sequence is STDRFNWLEGKPAVKAA.

This sequence belongs to the antenna complex alpha subunit family. As to quaternary structure, the core complex is formed by different alpha and beta chains, binding bacteriochlorophyll molecules, and arranged most probably in tetrameric structures disposed around the reaction center. The non-pigmented gamma chains may constitute additional components.

The protein localises to the cell inner membrane. In terms of biological role, antenna complexes are light-harvesting systems, which transfer the excitation energy to the reaction centers. In Rhodoblastus acidophilus (Rhodopseudomonas acidophila), this protein is Light-harvesting protein B-880 alpha chain.